The sequence spans 217 residues: Glycerol-3-phosphate acyltransferase (217 aa).

6 helical membrane passes run 3-23, 56-76, 78-98, 120-140, 142-162, and 163-183; these read IVILLLVAYLLGSIPSGVWIG, VLLMDILKGTLATSLPYLFGL, GVNPLFFGVAAVLGHTFPIFA, FFIYSALIFVICLYLTSMVSL, SMISAVLITLSTIILPFTVPA, and ILPTFNWLLTVIAIALTTFIF.

It belongs to the PlsY family. Probably interacts with PlsX.

It is found in the cell membrane. The enzyme catalyses an acyl phosphate + sn-glycerol 3-phosphate = a 1-acyl-sn-glycero-3-phosphate + phosphate. It functions in the pathway lipid metabolism; phospholipid metabolism. In terms of biological role, catalyzes the transfer of an acyl group from acyl-phosphate (acyl-PO(4)) to glycerol-3-phosphate (G3P) to form lysophosphatidic acid (LPA). This enzyme utilizes acyl-phosphate as fatty acyl donor, but not acyl-CoA or acyl-ACP. This chain is Glycerol-3-phosphate acyltransferase, found in Enterococcus faecalis (strain ATCC 700802 / V583).